Here is a 332-residue protein sequence, read N- to C-terminus: Glycerol-3-phosphate dehydrogenase [NAD(P)+] (332 aa).

Positions 11, 12, 32, and 106 each coordinate NADPH. 3 residues coordinate sn-glycerol 3-phosphate: lysine 106, glycine 137, and serine 139. Alanine 141 contributes to the NADPH binding site. Positions 192, 245, 255, 256, and 257 each coordinate sn-glycerol 3-phosphate. Lysine 192 acts as the Proton acceptor in catalysis. Position 256 (arginine 256) interacts with NADPH. NADPH-binding residues include valine 280 and glutamate 282.

The protein belongs to the NAD-dependent glycerol-3-phosphate dehydrogenase family.

The protein resides in the cytoplasm. It carries out the reaction sn-glycerol 3-phosphate + NAD(+) = dihydroxyacetone phosphate + NADH + H(+). The enzyme catalyses sn-glycerol 3-phosphate + NADP(+) = dihydroxyacetone phosphate + NADPH + H(+). The protein operates within membrane lipid metabolism; glycerophospholipid metabolism. Catalyzes the reduction of the glycolytic intermediate dihydroxyacetone phosphate (DHAP) to sn-glycerol 3-phosphate (G3P), the key precursor for phospholipid synthesis. This chain is Glycerol-3-phosphate dehydrogenase [NAD(P)+], found in Staphylococcus haemolyticus (strain JCSC1435).